Here is a 3433-residue protein sequence, read N- to C-terminus: Genome polyprotein (3433 aa).

The interaction with host EXOC1 stretch occupies residues 2-15; the sequence is SKKPGGPGKSRAVN. Topologically, residues 2–108 are cytoplasmic; sequence SKKPGGPGKS…SSKQKKRGGK (107 aa). Residues 37-72 are hydrophobic; homodimerization of capsid protein C; the sequence is LIDGKGPIRFVLALLAFFRFTAIAPTRAVLDRWRGV. Positions 106–123 are cleaved as a propeptide — ER anchor for the capsid protein C, removed in mature form by serine protease NS3; it reads GGKTGIAVMIGLIASVGA. Residues 109–129 traverse the membrane as a helical segment; the sequence is TGIAVMIGLIASVGAVTLSNF. The Extracellular segment spans residues 130 to 248; that stretch reads QGKVMMTVNA…KATRYLVKTE (119 aa). N-linked (GlcNAc...) asparagine; by host glycosylation is present at N138. Residues 249–269 form a helical membrane-spanning segment; sequence SWILRNPGYALVAAVIGWMLG. Over 270 to 275 the chain is Cytoplasmic; that stretch reads SNTMQR. Residues 276-290 traverse the membrane as a helical segment; the sequence is VVFVVLLLLVAPAYS. The Extracellular segment spans residues 291 to 743; it reads FNCLGMSNRD…QVFGGAFRSL (453 aa). Intrachain disulfides connect C293/C320, C350/C406, C350/C411, C364/C395, C382/C406, and C382/C411. Positions 388–401 are fusion peptide; it reads DRGWGNGCGLFGKG. N-linked (GlcNAc...) asparagine; by host glycosylation occurs at N444. 2 disulfide bridges follow: C480–C578 and C595–C626. The helical transmembrane segment at 744–764 threads the bilayer; sequence FGGMSWITQGLLGALLLWMGI. Residues 765-770 are Cytoplasmic-facing; that stretch reads NARDRS. Residues 771 to 791 traverse the membrane as a helical segment; the sequence is IALTFLAVGGVLLFLSVNVHA. Over 792–1216 the chain is Extracellular; sequence DTGCAIDISR…AFAESNSGGD (425 aa). 2 cysteine pairs are disulfide-bonded: C795-C806 and C846-C934. Residues N921, N966, and N998 are each glycosylated (N-linked (GlcNAc...) asparagine; by host). 4 disulfide bridges follow: C970–C1014, C1071–C1120, C1082–C1103, and C1104–C1107. A helical transmembrane segment spans residues 1217–1237; it reads VVHLALMATFKIQPVFMVASF. The Cytoplasmic portion of the chain corresponds to 1238–1245; that stretch reads LKARWTNQ. A helical transmembrane segment spans residues 1246–1268; sequence ENILLMLAAVFFQMAYHDARQIL. At 1269–1288 the chain is on the lumenal side; that stretch reads LWEIPDVLNSLAVAWMILRA. A helical transmembrane segment spans residues 1289 to 1309; sequence ITFTTTSNVVVPLLALLTPGL. Over 1310 to 1313 the chain is Cytoplasmic; it reads RCLN. Residues 1314-1331 traverse the membrane as a helical segment; it reads LDVYRILLLMVGIGSLIR. Over 1332 to 1345 the chain is Lumenal; it reads EKRSAAAKKKGASL. The chain crosses the membrane as a helical span at residues 1346–1366; the sequence is LCLALASTGLFNPMILAAGLI. Residues 1367–1375 are Cytoplasmic-facing; sequence ACDPNRKRG. A helical membrane pass occupies residues 1376–1396; that stretch reads WPATEVMTAVGLMFAIVGGLA. Topologically, residues 1397–1399 are lumenal; it reads ELD. Residues 1400–1420 traverse the membrane as a helical segment; sequence IDSMAIPMTIAGLMFAAFVIS. Topologically, residues 1421–1477 are cytoplasmic; sequence GKSTDMWIERTADISWESDAEITGSSERVDVRLDDDGNFQLMNDPGAPWKIWMLRMV. The interacts with and activates NS3 protease stretch occupies residues 1428–1467; the sequence is IERTADISWESDAEITGSSERVDVRLDDDGNFQLMNDPGA. An intramembrane region (helical) is located at residues 1478–1498; sequence CLAISAYTPWAILPSVVGFWI. The Cytoplasmic portion of the chain corresponds to 1499–2174; that stretch reads TLQYTKRGGV…RMALEELPDA (676 aa). Positions 1506-1683 constitute a Peptidase S7 domain; that stretch reads GGVLWDTPSP…ERMDEPIPAG (178 aa). Catalysis depends on charge relay system; for serine protease NS3 activity residues H1556, D1580, and S1640. The 157-residue stretch at 1686 to 1842 folds into the Helicase ATP-binding domain; the sequence is PEMLRKKQIT…ESNSPISDLQ (157 aa). The tract at residues 1690–1693 is important for RNA-binding; it reads RKKQ. 1699-1706 contacts ATP; that stretch reads LHPGAGKT. The DEAH box motif lies at 1790–1793; it reads DEAH. In terms of domain architecture, Helicase C-terminal spans 1853 to 2018; the sequence is GYEWITEYTG…GLIAQFYQPE (166 aa). K1894 carries the post-translational modification N6-acetyllysine; by host. Residues 2169-2173 form a regulates the ATPase activity of NS3 helicase region; sequence EELPD. The chain crosses the membrane as a helical span at residues 2175 to 2195; sequence LQTIALIALLSVMTMGVFFLL. The Lumenal segment spans residues 2196–2200; sequence MQRKG. Residues 2201 to 2221 constitute an intramembrane region (helical); sequence IGKIGLGGAVLGVATFFCWMA. Position 2222 (E2222) is a topological domain, lumenal. A helical membrane pass occupies residues 2223-2243; it reads VPGTKIAGMLLLSLLLMIVLI. Residues 2244 to 2258 lie on the Cytoplasmic side of the membrane; the sequence is PEPEKQRSQTDNQLA. A helical transmembrane segment spans residues 2259–2279; sequence VFLICVMTLVSAVAANEMGWL. Topologically, residues 2280–2312 are lumenal; that stretch reads DKTKSDISSLFGQRIEVKENFSMGEFLLDLRPA. Residues 2313–2333 constitute an intramembrane region (helical); that stretch reads TAWSLYAVTTAVLTPLLKHLI. Residues 2334–2380 lie on the Lumenal side of the membrane; that stretch reads TSDYINTSLTSINVQASALFTLARGFPFVDVGVSALLLAAGCWGQVT. A helical membrane pass occupies residues 2381–2401; that stretch reads LTVTVTAATLLFCHYAYMVPG. Over 2402-2444 the chain is Cytoplasmic; the sequence is WQAEAMRSAQRRTAAGIMKNAVVDGIVATDVPELERTTPIMQK. Residues 2445-2465 form a helical membrane-spanning segment; it reads KVGQIMLILVSLAAVVVNPSV. Topologically, residues 2466 to 2470 are lumenal; the sequence is KTVRE. Residues 2471-2491 traverse the membrane as a helical segment; the sequence is AGILITAAAVTLWENGASSVW. The Cytoplasmic segment spans residues 2492 to 3433; that stretch reads NATTAIGLCH…DTTLVEDTVL (942 aa). Residues 2529-2794 enclose the mRNA cap 0-1 NS5-type MT domain; the sequence is GGAKGRTLGE…DVNLGSGTRA (266 aa). S2584 provides a ligand contact to S-adenosyl-L-methionine. S2584 carries the post-translational modification Phosphoserine. K2589 acts as the For 2'-O-MTase activity in catalysis. Positions 2614, 2615, 2632, 2633, 2639, 2659, 2660, 2674, and 2675 each coordinate S-adenosyl-L-methionine. The For 2'-O-MTase activity role is filled by D2674. Residues K2710 and E2746 each act as for 2'-O-MTase activity in the active site. An S-adenosyl-L-methionine-binding site is contributed by Y2748. The short motif at 2917-2919 is the Nuclear localization signal element; that stretch reads REK. The Zn(2+) site is built by E2968, H2972, C2977, and C2980. Residues 3058–3210 enclose the RdRp catalytic domain; sequence GKIYADDTAG…KPLDDRFATS (153 aa). Residues H3245, C3261, and C3380 each coordinate Zn(2+). Residues 3431 to 3433 carry the PDZ-binding motif; sequence TVL.

The protein in the N-terminal section; belongs to the class I-like SAM-binding methyltransferase superfamily. mRNA cap 0-1 NS5-type methyltransferase family. As to quaternary structure, homodimer. Interacts (via N-terminus) with host EXOC1 (via C-terminus); this interaction results in EXOC1 degradation through the proteasome degradation pathway. Interacts with host DDX56; this interaction plays an important role in genomic RNA encapsidation. In terms of assembly, forms heterodimers with envelope protein E in the endoplasmic reticulum and Golgi. Homodimer; in the endoplasmic reticulum and Golgi. As to quaternary structure, homodimer; Homohexamer when secreted. NS1 interacts with NS4B. Interacts with host complement protein CFH; this interaction leads to the degradation of C3. In terms of assembly, forms a heterodimer with serine protease NS3. May form homooligomers. Interacts with human SPCS1. Forms a heterodimer with NS2B. Interacts with NS4B. Interacts with unphosphorylated RNA-directed RNA polymerase NS5; this interaction stimulates RNA-directed RNA polymerase NS5 guanylyltransferase activity. As to quaternary structure, interacts with host RTN3; this interaction is important to remodel host cell membranes. In terms of assembly, interacts with Serine protease/Helicase NS3. Interacts with NS1. Homodimer. Interacts with host STAT2; this interaction inhibits the phosphorylation of the latter, and, when all viral proteins are present (polyprotein), targets STAT2 for degradation. Specific enzymatic cleavages in vivo yield mature proteins. Cleavages in the lumen of endoplasmic reticulum are performed by host signal peptidase, whereas cleavages in the cytoplasmic side are performed by serine protease NS3. Signal cleavage at the 2K-4B site requires a prior NS3 protease-mediated cleavage at the 4A-2K site. Post-translationally, cleaved in post-Golgi vesicles by a host furin, releasing the mature small envelope protein M, and peptide pr. This cleavage is incomplete as up to 30% of viral particles still carry uncleaved prM. In terms of processing, N-glycosylated. N-glycosylated. The excreted form is glycosylated and this is required for efficient secretion of the protein from infected cells. Post-translationally, acetylated by host KAT5. Acetylation modulates NS3 RNA-binding and unwinding activities and plays an important positive role for viral replication. In terms of processing, phosphorylated on serines residues. This phosphorylation may trigger NS5 nuclear localization.

Its subcellular location is the virion. The protein resides in the host nucleus. It localises to the host cytoplasm. It is found in the host perinuclear region. The protein localises to the secreted. Its subcellular location is the virion membrane. The protein resides in the host endoplasmic reticulum membrane. It carries out the reaction Selective hydrolysis of -Xaa-Xaa-|-Yaa- bonds in which each of the Xaa can be either Arg or Lys and Yaa can be either Ser or Ala.. The enzyme catalyses RNA(n) + a ribonucleoside 5'-triphosphate = RNA(n+1) + diphosphate. It catalyses the reaction a ribonucleoside 5'-triphosphate + H2O = a ribonucleoside 5'-diphosphate + phosphate + H(+). The catalysed reaction is ATP + H2O = ADP + phosphate + H(+). It carries out the reaction a 5'-end (5'-triphosphoguanosine)-ribonucleoside in mRNA + S-adenosyl-L-methionine = a 5'-end (N(7)-methyl 5'-triphosphoguanosine)-ribonucleoside in mRNA + S-adenosyl-L-homocysteine. The enzyme catalyses a 5'-end (N(7)-methyl 5'-triphosphoguanosine)-ribonucleoside in mRNA + S-adenosyl-L-methionine = a 5'-end (N(7)-methyl 5'-triphosphoguanosine)-(2'-O-methyl-ribonucleoside) in mRNA + S-adenosyl-L-homocysteine + H(+). Plays a role in virus budding by binding to the cell membrane and gathering the viral RNA into a nucleocapsid that forms the core of a mature virus particle. During virus entry, may induce genome penetration into the host cytoplasm after hemifusion induced by the surface proteins. Can migrate to the cell nucleus where it modulates host functions. Overcomes the anti-viral effects of host EXOC1 by sequestering and degrading the latter through the proteasome degradation pathway. In terms of biological role, inhibits RNA silencing by interfering with host Dicer. Functionally, prevents premature fusion activity of envelope proteins in trans-Golgi by binding to envelope protein E at pH6.0. After virion release in extracellular space, gets dissociated from E dimers. Its function is as follows. Acts as a chaperone for envelope protein E during intracellular virion assembly by masking and inactivating envelope protein E fusion peptide. prM is the only viral peptide matured by host furin in the trans-Golgi network probably to avoid catastrophic activation of the viral fusion activity in acidic Golgi compartment prior to virion release. prM-E cleavage is inefficient, and many virions are only partially matured. These uncleaved prM would play a role in immune evasion. May play a role in virus budding. Exerts cytotoxic effects by activating a mitochondrial apoptotic pathway through M ectodomain. May display a viroporin activity. In terms of biological role, binds to host cell surface receptor and mediates fusion between viral and cellular membranes. Envelope protein is synthesized in the endoplasmic reticulum in the form of heterodimer with protein prM. They play a role in virion budding in the ER, and the newly formed immature particle is covered with 60 spikes composed of heterodimer between precursor prM and envelope protein E. The virion is transported to the Golgi apparatus where the low pH causes dissociation of PrM-E heterodimers and formation of E homodimers. prM-E cleavage is inefficient, and many virions are only partially matured. These uncleaved prM would play a role in immune evasion. Functionally, involved in immune evasion, pathogenesis and viral replication. Once cleaved off the polyprotein, is targeted to three destinations: the viral replication cycle, the plasma membrane and the extracellular compartment. Essential for viral replication. Required for formation of the replication complex and recruitment of other non-structural proteins to the ER-derived membrane structures. Excreted as a hexameric lipoparticle that plays a role against host immune response. Antagonizing the complement function. Binds to the host macrophages and dendritic cells. Inhibits signal transduction originating from Toll-like receptor 3 (TLR3). Its function is as follows. Component of the viral RNA replication complex that functions in virion assembly and antagonizes the host alpha/beta interferon antiviral response. Required cofactor for the serine protease function of NS3. May have membrane-destabilizing activity and form viroporins. In terms of biological role, displays three enzymatic activities: serine protease, NTPase and RNA helicase. NS3 serine protease, in association with NS2B, performs its autocleavage and cleaves the polyprotein at dibasic sites in the cytoplasm: C-prM, NS2A-NS2B, NS2B-NS3, NS3-NS4A, NS4A-2K and NS4B-NS5. NS3 RNA helicase binds RNA and unwinds dsRNA in the 3' to 5' direction. NS3 supports the separation of RNA daughter and template strands during viral replication. The helicase part is involved in the inhibition of phosphorylation of host STAT1, and thereby inhibition of host type-I IFN signaling. In addition, NS3 assists the initiation of replication by unwinding the RNA secondary structure in the 3' non-translated region (NTR). Inhibits STAT2 translocation in the nucleus after IFN-alpha treatment. Functionally, facilitates host membrane remodelling necessary for viral replication by interacting with host RTN3. Regulates the ATPase activity of the NS3 helicase activity. NS4A allows NS3 helicase to conserve energy during unwinding. Its function is as follows. Functions as a signal peptide for NS4B and is required for the interferon antagonism activity of the latter. Induces the formation of ER-derived membrane vesicles where the viral replication takes place. Inhibits interferon (IFN)-induced host STAT1 phosphorylation and nuclear translocation, thereby preventing the establishment of cellular antiviral state by blocking the IFN-alpha/beta pathway. Inhibits STAT2 translocation in the nucleus after IFN-alpha treatment. In terms of biological role, replicates the viral (+) and (-) genome, and performs the capping of genomes in the cytoplasm. NS5 methylates viral RNA cap at guanine N-7 and ribose 2'-O positions. Besides its role in RNA genome replication, also prevents the establishment of cellular antiviral state by blocking the interferon-alpha/beta (IFN-alpha/beta) signaling pathway. Inhibits host JAK1 and TYK2 phosphorylation, thereby preventing activation of JAK-STAT signaling pathway. In Aedes (Tropical bont tick), this protein is Genome polyprotein.